The chain runs to 460 residues: Solute carrier family 52, riboflavin transporter, member 3 (460 aa).

At 1–6 (MAFLTH) the chain is on the cytoplasmic side. Residues 7–27 (LLVCVFGMGSWVAINGLWVEL) form a helical membrane-spanning segment. Residues 28–37 (PLLVTELPEA) lie on the Extracellular side of the membrane. The helical transmembrane segment at 38–58 (WYLPSYLTVVIQLANIGPLLV) threads the bilayer. The Cytoplasmic segment spans residues 59 to 71 (TLMHRFRPGCLSE). A helical transmembrane segment spans residues 72-92 (VPVIFLILCVGTAACILLAFL). The Extracellular segment spans residues 93–105 (WNVTSWIQGGQHS). Asparagine 94 is a glycosylation site (N-linked (GlcNAc...) asparagine). Residues 106 to 126 (VAFIVLTFFLALVDCTSSVTF) traverse the membrane as a helical segment. Residues 127-137 (LPFMSQLPTYY) lie on the Cytoplasmic side of the membrane. A helical membrane pass occupies residues 138–158 (LTTFFIGEGLSGLLPALVALV). At 159-211 (QGSGITTCVNVTETPGTTLNTMETPITQGNLSPSLPSPSWHQESRYLAPRFSP) the chain is on the extracellular side. Asparagine 168 carries N-linked (GlcNAc...) asparagine glycosylation. A helical membrane pass occupies residues 212–232 (LLFFLLLSFLTGCCLVAFFLL). Residues 233 to 291 (QRQPWGRQGSIEDLLHSQVTLHSIRPRDTEDTSSLGAPVSSPGKGSVEASVASLRPAQL) are Cytoplasmic-facing. Phosphoserine is present on residues serine 242 and serine 266. Residues 292 to 312 (AFIYSVVAFVNALTNGVLPSV) traverse the membrane as a helical segment. Topologically, residues 313-326 (QTYSCLPYGPVAYH) are extracellular. A helical transmembrane segment spans residues 327–347 (LSATLSSVASPLACFLPIFLP). Residues 348–350 (NRS) lie on the Cytoplasmic side of the membrane. Residues 351-371 (LLFLGVLTVLGTGFGAYNMAM) form a helical membrane-spanning segment. At 372–387 (AAMSPCPVLQGHWGGE) the chain is on the extracellular side. Cysteine 377 and cysteine 454 are disulfide-bonded. The helical transmembrane segment at 388 to 408 (VLIVLSWVLFAACLSYVKVML) threads the bilayer. At 409–418 (GVILRDRSRS) the chain is on the cytoplasmic side. The helical transmembrane segment at 419–439 (ALLWCGAAVQLGSLIGALLMF) threads the bilayer. The Extracellular portion of the chain corresponds to 440–460 (PLVNVLKLFSSADYCSLDCSV).

Belongs to the riboflavin transporter family. As to expression, within the small intestine, it is particularly expressed in the jujenum and the ileum. Almost negligible expression in the stomach, duodenum, and large intestine.

It is found in the cell membrane. The catalysed reaction is riboflavin(in) = riboflavin(out). Its function is as follows. Plasma membrane transporter mediating the uptake by cells of the water soluble vitamin B2/riboflavin that plays a key role in biochemical oxidation-reduction reactions of the carbohydrate, lipid, and amino acid metabolism. This chain is Solute carrier family 52, riboflavin transporter, member 3 (Slc52a3), found in Mus musculus (Mouse).